Reading from the N-terminus, the 364-residue chain is Aminomethyltransferase (364 aa).

It belongs to the GcvT family. The glycine cleavage system is composed of four proteins: P, T, L and H.

The catalysed reaction is N(6)-[(R)-S(8)-aminomethyldihydrolipoyl]-L-lysyl-[protein] + (6S)-5,6,7,8-tetrahydrofolate = N(6)-[(R)-dihydrolipoyl]-L-lysyl-[protein] + (6R)-5,10-methylene-5,6,7,8-tetrahydrofolate + NH4(+). The glycine cleavage system catalyzes the degradation of glycine. This Shigella sonnei (strain Ss046) protein is Aminomethyltransferase.